A 263-amino-acid polypeptide reads, in one-letter code: Type II restriction enzyme TthHB8I (263 aa).

It catalyses the reaction Endonucleolytic cleavage of DNA to give specific double-stranded fragments with terminal 5'-phosphates.. A P subtype restriction enzyme that recognizes the double-stranded sequence 5'-TCGA-3' and cleaves after T-1. The sequence is that of Type II restriction enzyme TthHB8I (tthHB8IR) from Thermus thermophilus (strain ATCC 27634 / DSM 579 / HB8).